Here is a 367-residue protein sequence, read N- to C-terminus: Flagellar P-ring protein (367 aa).

Positions 1-21 are cleaved as a signal peptide; it reads MYVFKALAGIVLALVATLAHA.

The protein belongs to the FlgI family. In terms of assembly, the basal body constitutes a major portion of the flagellar organelle and consists of four rings (L,P,S, and M) mounted on a central rod.

The protein resides in the periplasm. It localises to the bacterial flagellum basal body. Functionally, assembles around the rod to form the L-ring and probably protects the motor/basal body from shearing forces during rotation. The polypeptide is Flagellar P-ring protein (Salmonella choleraesuis (strain SC-B67)).